Consider the following 88-residue polypeptide: FXYD domain-containing ion transport regulator 3 (88 aa).

Positions 1–20 (MQEVVLSLLVLLAGLPTLDA) form a signal peptide, not cleaved. The Extracellular portion of the chain corresponds to 1-38 (MQEVVLSLLVLLAGLPTLDANDPENKNDPFYYDWYSLR). A helical membrane pass occupies residues 39–59 (VGGLICAGILCALGIIVLMSG). The Cytoplasmic portion of the chain corresponds to 60–88 (KCKCKFRQKPSHRPGEGPPLITPGSAHNC). Positions 67-88 (QKPSHRPGEGPPLITPGSAHNC) are disordered.

It belongs to the FXYD family. In terms of assembly, regulatory subunit of the sodium/potassium-transporting ATPase which is composed of a catalytic alpha subunit, a non-catalytic beta subunit and an additional regulatory subunit. Interacts with catalytic alpha subunit ATP1A1. Also interacts with non-catalytic beta subunit ATP1B1. Interacts with the ATP1A1-ATP1B1, ATP1A2-ATP1B1 and ATP1A3-ATP1B1 NKA isozymes. Post-translationally, glutathionylated. Expressed at high levels in heart, skeletal muscle and liver with low levels of expression in breast, brain, lung, stomach and colon. In the gastric gland, mainly expressed in the mucus cells forming the upper part of the gland and is absent from the parietal cells.

It localises to the cell membrane. Its function is as follows. Associates with and regulates the activity of the sodium/potassium-transporting ATPase (NKA) which transports Na(+) out of the cell and K(+) into the cell. Reduces glutathionylation of the NKA beta-1 subunit ATP1B1, thus reversing glutathionylation-mediated inhibition of ATP1B1. Induces a hyperpolarization-activated chloride current when expressed in Xenopus oocytes. The polypeptide is FXYD domain-containing ion transport regulator 3 (Fxyd3) (Mus musculus (Mouse)).